The sequence spans 111 residues: Small ribosomal subunit protein bS16 (111 aa).

Residues 92 to 111 are disordered; it reads MEVKAKNRKARPSKKEDKEA.

The protein belongs to the bacterial ribosomal protein bS16 family.

The polypeptide is Small ribosomal subunit protein bS16 (Rickettsia massiliae (strain Mtu5)).